The following is a 522-amino-acid chain: MEELQGYLEKDRSRQQPLLYPLLFQEYIYALAHDRGLKGSLFYEPTEVFGYDSKFSLALVKRLIIRIYQQNFFLSVVNDSNKNRFVSHHHNNFCYSHFYSQMISEGFAILVEIPFSLRLVSYFEKKEIPKSHNLRSIHSFFPFLEDKLLHSDYVSDIIIPHPIHMEILVQILQCWIQDVPLLHFLRFFLHKYHNWNSFLITPKKSIYVFSKENKRLFRFLYNSYVSECEFLLVFLRKQSSYLRLTSFGTFLERRHFYVKMEHLQMQHLILIVVCRDYFQGTLWSFKDPFMHYVRCQGKAVLASKGTHFLMKKWKYNFVNLWQYYFHFWYQSYRIHINQLSNYSFYFMGYLSSLLKNSSTVRNQMLENSFLIDTVTNKFETIVPVIFLIGSLSKAQFCTVSGHPISKPIWADLSDSEIIERFGRMCRNLSHYHSGSSKKQGLYRIKYILRLSCARTLAGKHKSTVRTFLRRLGSGLLEEFFTEEEQVLSLILPKTIPFTFYGSKKERIWYLDIIRINDXVNHE.

This sequence belongs to the intron maturase 2 family. MatK subfamily.

It is found in the plastid. The protein resides in the chloroplast. Its function is as follows. Usually encoded in the trnK tRNA gene intron. Probably assists in splicing its own and other chloroplast group II introns. The protein is Maturase K of Iris domestica (Leopard lily).